The following is a 162-amino-acid chain: Anthrone oxygenase nsrD (162 aa).

3 helical membrane passes run Phe17–Ile37, Gly54–Leu74, and Pro86–Val106. N-linked (GlcNAc...) asparagine glycosylation occurs at Asn109. The chain crosses the membrane as a helical span at residues Leu130–Phe150.

It belongs to the anthrone oxygenase family.

The protein resides in the membrane. It catalyses the reaction emodin anthrone + O2 = emodin + H2O + H(+). It participates in secondary metabolite biosynthesis. Its function is as follows. Anthrone oxygenase; part of the gene cluster that mediates the biosynthesis of the tetrahydroxanthone dimer neosartorin, which exhibits antibacterial activity. The two different monomeric units appear to be synthesized by the same set of enzymes, among which the Baeyer-Villiger monooxygenase nsrF is the key enzyme for the divergence of the biosynthetic routes. The pathway begins with the synthesis of atrochrysone thioester by the polyketide synthase nsrB. The atrochrysone carboxyl ACP thioesterase nsrC then breaks the thioester bond and releases the atrochrysone carboxylic acid from AacuL. Atrochrysone carboxylic acid is decarboxylated by the decarboxylase nsrE, and oxidized by the anthrone oxygenase nsrD to yield emodin. Emodin is then reduced to emodin hydroquinone by the oxidoreductase nsrR. A-ring reduction by the short chain dehydrogenase nsrJ, dehydration by the scytalone dehydratase-like protein nsrI and probable spontaneous re-oxidation, results in overall deoxygenation to chrysophanol. The Baeyer-Villiger monooxygenase nsrF accepts chrysophanol as a substrate to insert one oxygen atom at two different positions to yield the precursors of both monomric units. NsrF is promiscuous/flexible in interacting with the 2 (non methylated and methylated) aromatic rings of chrysophanol, thus diverging the biosynthetic pathway at this point. After the hydrolysis of the lactones, methylesterification by the methyltransferase nsrG yields respectively moniliphenone and 2,2',6'-trihydroxy-4-methyl-6-methoxya-cyldiphenylmethanone. The next steps are the hydroxylation by the FAD-dependent monooxygenase nsrK, followed by isomerization by the monooxygenase nsrQ. The short chain dehydrogenase/reductase nsrO then catalyzes the C-5 ketoreduction to give the xanthone skeleton of blennolide C and 5-acetylblennolide A. The acetyltransferase nsrL has a strict substrate specificity and uses only blennolide A but not blennolide C to yield 5-acetylblennolide A as the single-acetylated product. In the final step of the biosynthesis, the heterodimerization of the 2 xanthones, blennolide C and 5-acetylblennolide A, is catalyzed by the cytochrome P450 monooxygenase nsrP. NsrP can utilize at least three different xanthones as its substrates to perform the dimerization reaction. This Aspergillus novofumigatus (strain IBT 16806) protein is Anthrone oxygenase nsrD.